The sequence spans 429 residues: Probable beta-1,3-galactosyl-O-glycosyl-glycoprotein beta-1,6-N-acetylglucosaminyltransferase 7 (429 aa).

The Cytoplasmic segment spans residues 1–8 (MSQLRATK). A helical; Signal-anchor for type II membrane protein membrane pass occupies residues 9–25 (PGILVCAAIGIFVFLYL). The Extracellular portion of the chain corresponds to 26–429 (RNPTSEDPEE…ESHLNRRLNP (404 aa)). Cystine bridges form between Cys53–Cys205, Cys139–Cys354, Cys160–Cys187, and Cys363–Cys394. Asn87 carries an N-linked (GlcNAc...) asparagine glycan. An N-linked (GlcNAc...) asparagine glycan is attached at Asn272.

This sequence belongs to the glycosyltransferase 14 family.

It is found in the golgi apparatus membrane. It participates in protein modification; protein glycosylation. In terms of biological role, probable glycosyltransferase. In Sus scrofa (Pig), this protein is Probable beta-1,3-galactosyl-O-glycosyl-glycoprotein beta-1,6-N-acetylglucosaminyltransferase 7.